Consider the following 156-residue polypeptide: Cyclic pyranopterin monophosphate synthase (156 aa).

Residues 73 to 75 (LCH) and 110 to 111 (ME) each bind substrate. Residue Asp125 is part of the active site.

It belongs to the MoaC family. Homohexamer; trimer of dimers.

It catalyses the reaction (8S)-3',8-cyclo-7,8-dihydroguanosine 5'-triphosphate = cyclic pyranopterin phosphate + diphosphate. Its pathway is cofactor biosynthesis; molybdopterin biosynthesis. In terms of biological role, catalyzes the conversion of (8S)-3',8-cyclo-7,8-dihydroguanosine 5'-triphosphate to cyclic pyranopterin monophosphate (cPMP). The sequence is that of Cyclic pyranopterin monophosphate synthase from Pseudomonas putida (strain W619).